We begin with the raw amino-acid sequence, 126 residues long: Small ribosomal subunit protein uS11 (126 aa).

Belongs to the universal ribosomal protein uS11 family. As to quaternary structure, part of the 30S ribosomal subunit. Interacts with proteins S7 and S18. Binds to IF-3.

In terms of biological role, located on the platform of the 30S subunit, it bridges several disparate RNA helices of the 16S rRNA. Forms part of the Shine-Dalgarno cleft in the 70S ribosome. The sequence is that of Small ribosomal subunit protein uS11 from Orientia tsutsugamushi (strain Boryong) (Rickettsia tsutsugamushi).